The following is a 380-amino-acid chain: Cytochrome b (380 aa).

The next 4 membrane-spanning stretches (helical) occupy residues 34–54 (FGSL…LLAM), 78–99 (WLIR…FLHI), 114–134 (WNTG…GYVL), and 179–199 (FFAL…IHLT). Positions 84 and 98 each coordinate heme b. His183 and His197 together coordinate heme b. An a ubiquinone-binding site is contributed by His202. 4 helical membrane-spanning segments follow: residues 227-247 (IKDI…ALFS), 289-309 (LGGV…PFLH), 321-341 (LSQT…WIGS), and 348-368 (FIII…ILFP).

It belongs to the cytochrome b family. In terms of assembly, the cytochrome bc1 complex contains 11 subunits: 3 respiratory subunits (MT-CYB, CYC1 and UQCRFS1), 2 core proteins (UQCRC1 and UQCRC2) and 6 low-molecular weight proteins (UQCRH/QCR6, UQCRB/QCR7, UQCRQ/QCR8, UQCR10/QCR9, UQCR11/QCR10 and a cleavage product of UQCRFS1). This cytochrome bc1 complex then forms a dimer. Heme b serves as cofactor.

The protein resides in the mitochondrion inner membrane. In terms of biological role, component of the ubiquinol-cytochrome c reductase complex (complex III or cytochrome b-c1 complex) that is part of the mitochondrial respiratory chain. The b-c1 complex mediates electron transfer from ubiquinol to cytochrome c. Contributes to the generation of a proton gradient across the mitochondrial membrane that is then used for ATP synthesis. This chain is Cytochrome b (MT-CYB), found in Coturnix japonica (Japanese quail).